The following is a 156-amino-acid chain: Calcium-binding protein A (156 aa).

4 consecutive EF-hand domains span residues 4–39 (AITK…TGSK), 40–75 (DPLR…VAAK), 80–115 (AINN…NNPD), and 118–153 (APLM…YKSL). The Ca(2+) site is built by Asp-17, Asn-19, Asp-21, Asn-23, Glu-28, Asp-53, Asp-55, Asp-57, Glu-64, Asp-93, Asp-95, Asp-97, Arg-99, Glu-104, Asp-131, Asp-133, Asp-135, and Glu-142.

This is Calcium-binding protein A (cbpA) from Dictyostelium discoideum (Social amoeba).